Reading from the N-terminus, the 296-residue chain is Cell surface glycoprotein CD200 receptor 3 (296 aa).

The signal sequence occupies residues 1–25 (MHALGRTLALMLLIFITILVPESSC). Over 26–245 (SVKGREEIPP…NRGTTSILPS (220 aa)) the chain is Extracellular. One can recognise an Ig-like V-type domain in the interval 48-162 (PDGVGVTMEI…GIFQERHSIQ (115 aa)). Residues C75 and C146 are joined by a disulfide bond. Positions 151–232 (TDGIFQERHS…SHLTDNWILS (82 aa)) constitute an Ig-like C2-type domain. Residues N167 and N199 are each glycosylated (N-linked (GlcNAc...) asparagine). C172 and C220 are joined by a disulfide. The chain crosses the membrane as a helical span at residues 246-266 (LLSILYVKLAVTVLIVGFAFF). Residues 267 to 296 (QKRNYFSSRDLVFMKERRSKRSVWQREALG) lie on the Cytoplasmic side of the membrane.

This sequence belongs to the CD200R family. As to quaternary structure, isoform 3 interacts with TYROBP. Isoform 8 does not interact with TYROBP. As to expression, expressed in uterus and bone marrow-derived mast cells (at protein level). Expressed in uterus, spleen, bone marrow-derived dendritic, basophil and mast cells. Expressed in the lung of N.brasiliensis-infected mice. Weakly expressed in brain, testis, lung and thymus.

The protein resides in the membrane. Functionally, according to PubMed:15187158 isoform 4 is a receptor for the CD200 cell surface glycoprotein. According to PubMed:16081818 isoform 4 is not a receptor for the CD200/OX2 cell surface glycoprotein. Isoform 1, isoform 2 and isoform 3 are involved in the recruitment or surface expression of the TYROBP receptor. Isoform 6, isoform 7 and isoform 8 are not involved in the recruitment or surface expression of the TYROBP receptor. This chain is Cell surface glycoprotein CD200 receptor 3 (Cd200r3), found in Mus musculus (Mouse).